Consider the following 578-residue polypeptide: Phenylalanine--tRNA ligase beta subunit (578 aa).

A B5 domain is found at 292-370; sequence FDTDEKSVSH…RAYGFDNLEP (79 aa). The Mg(2+) site is built by aspartate 348, aspartate 354, aspartate 357, and aspartate 358.

The protein belongs to the phenylalanyl-tRNA synthetase beta subunit family. Type 2 subfamily. In terms of assembly, tetramer of two alpha and two beta subunits. It depends on Mg(2+) as a cofactor.

The protein localises to the cytoplasm. It catalyses the reaction tRNA(Phe) + L-phenylalanine + ATP = L-phenylalanyl-tRNA(Phe) + AMP + diphosphate + H(+). The sequence is that of Phenylalanine--tRNA ligase beta subunit from Halorubrum lacusprofundi (strain ATCC 49239 / DSM 5036 / JCM 8891 / ACAM 34).